Here is a 166-residue protein sequence, read N- to C-terminus: Nucleotide-binding protein Acid_3194 (166 aa).

The protein belongs to the YajQ family.

Functionally, nucleotide-binding protein. The chain is Nucleotide-binding protein Acid_3194 from Solibacter usitatus (strain Ellin6076).